The chain runs to 358 residues: MRTPRFRIQAKNVFLTYPKCSIPKEHLLSFIQTLSLQSNPKFIKICRELHQNGEPHLHALIQFEGKITITNNRLFDCVHPSCSTSFHPNIQGAKSSSDVKSYLDKDGDTVEWGQFQIDGRSARGGQQSANDAYAKALNSGSKSEALNVIRELVPKDFVLQFHNLNSNLDRIFQEPPAPYVSPFPCSSFDQVPVEIEEWVADNVRDSAARPWRPNSIVIEGDSRTGKTIWARSLGPHNYLCGHLDLSPKVFNNAAWYNVIDDVDPHYLKHFKEFMGSQRDWQSNTKYGKPVQIKGGIPTIFLCNPGPTSSYKEFLAEEKQEALKAWALKNAIFITLTEPLYSGSNQSHSQTSQEASHPA.

Positions 7 to 115 (RIQAKNVFLT…DGDTVEWGQF (109 aa)) constitute a CRESS-DNA virus Rep endonuclease domain. An RCR-1 motif is present at residues 14–17 (FLTY). 3 residues coordinate a divalent metal cation: Glu48, His56, and His58. Positions 56–58 (HLH) match the RCR-2 motif. The active-site For DNA cleavage activity is the Tyr102. The RCR-3 signature appears at 102–105 (YLDK). Residue Asp106 participates in a divalent metal cation binding. The binding to RBR1 stretch occupies residues 142–152 (KSEALNVIREL). Residues 155-175 (KDFVLQFHNLNSNLDRIFQEP) form an oligomerization region. An ATP-binding site is contributed by 220-227 (GDSRTGKT).

Belongs to the geminiviridae Rep protein family. Homooligomer. Interacts with the replication enhancer protein (REn). Interacts with host retinoblastoma-related protein 1 (RBR1), and may thereby induce the transcription of host replicative enzymes even if the cell is not dividing anymore. Interacts with host PCNA. Interacts with host SCE1 protein. Mg(2+) is required as a cofactor. Requires Mn(2+) as cofactor.

Its subcellular location is the host nucleus. Essential for the replication of viral ssDNA. The closed circular ssDNA genome is first converted to a superhelical dsDNA. Rep binds a specific region at the genome origin of replication. It introduces an endonucleolytic nick within the conserved sequence 5'-TAATATTAC-3' in the intergenic region of the genome present in all geminiviruses, thereby initiating the rolling circle replication (RCR). Following cleavage, binds covalently to the 5'-phosphate of DNA as a tyrosyl ester. The cleavage gives rise to a free 3'-OH that serves as a primer for the cellular DNA polymerase. The polymerase synthesizes the (+) strand DNA by rolling circle mechanism. After one round of replication, a Rep-catalyzed nucleotidyl transfer reaction releases a circular single-stranded virus genome, thereby terminating the replication. Displays origin-specific DNA cleavage, nucleotidyl transferase, ATPase and helicase activities. This Hewittia sublobata (Coralbush) protein is Replication-associated protein.